Here is a 398-residue protein sequence, read N- to C-terminus: Phosphopentomutase (398 aa).

Mn(2+)-binding residues include Asp-13, Asp-290, His-295, Asp-331, His-332, and His-343.

This sequence belongs to the phosphopentomutase family. Mn(2+) serves as cofactor.

It localises to the cytoplasm. It carries out the reaction 2-deoxy-alpha-D-ribose 1-phosphate = 2-deoxy-D-ribose 5-phosphate. The enzyme catalyses alpha-D-ribose 1-phosphate = D-ribose 5-phosphate. It participates in carbohydrate degradation; 2-deoxy-D-ribose 1-phosphate degradation; D-glyceraldehyde 3-phosphate and acetaldehyde from 2-deoxy-alpha-D-ribose 1-phosphate: step 1/2. Isomerase that catalyzes the conversion of deoxy-ribose 1-phosphate (dRib-1-P) and ribose 1-phosphate (Rib-1-P) to deoxy-ribose 5-phosphate (dRib-5-P) and ribose 5-phosphate (Rib-5-P), respectively. This chain is Phosphopentomutase, found in Clostridium tetani (strain Massachusetts / E88).